The primary structure comprises 298 residues: FH protein interacting protein FIP2 (298 aa).

The 72-residue stretch at 9 to 80 folds into the BTB domain; the sequence is SMVRLNIGGK…LRDGVIPSLS (72 aa). Pentapeptide repeat domains lie at 129–165, 166–203, 216–255, and 256–295; these read ERVR…FFSR, TNLQ…GALL, ACLV…NLKG, and AKLS…NMTG.

In terms of assembly, interacts with FH1. Expressed in all tissues but preferentially in roots and flowers.

It participates in protein modification; protein ubiquitination. May act as a substrate-specific adapter of an E3 ubiquitin-protein ligase complex (CUL3-RBX1-BTB) which mediates the ubiquitination and subsequent proteasomal degradation of target proteins. The chain is FH protein interacting protein FIP2 (FIP2) from Arabidopsis thaliana (Mouse-ear cress).